We begin with the raw amino-acid sequence, 399 residues long: Transferrin receptor subunit ESAG6 (399 aa).

The signal sequence occupies residues 1 to 17; the sequence is MRFWFVLLALLGKEIYA. N-linked (GlcNAc...) asparagine glycans are attached at residues Asn26 and Asn110. Cystine bridges form between Cys34–Cys161, Cys84–Cys312, and Cys144–Cys215. N-linked (GlcNAc...) asparagine glycosylation is found at Asn235, Asn250, and Asn360. Asn376 carries the GPI-anchor amidated asparagine lipid modification. The propeptide at 377–399 is removed in mature form; that stretch reads AAAIHLSVSTAALCRSALLLGVL.

As to quaternary structure, heterodimer composed of ESAG6 and ESAG7. Post-translationally, N-glycosylated. Glycosylation is dispensable for heterodimer formation and host transferrin binding.

The protein localises to the cell membrane. It is found in the flagellar pocket. Transferrin receptor subunit involved in receptor-mediated acquisition of iron from the environment by binding host TF/transferrin. The sequence is that of Transferrin receptor subunit ESAG6 from Trypanosoma brucei brucei.